A 292-amino-acid chain; its full sequence is 4-hydroxy-tetrahydrodipicolinate synthase (292 aa).

Pyruvate is bound at residue Thr-50. The Proton donor/acceptor role is filled by Tyr-139. Lys-167 (schiff-base intermediate with substrate) is an active-site residue. Ile-208 contacts pyruvate.

It belongs to the DapA family. As to quaternary structure, homotetramer; dimer of dimers.

Its subcellular location is the cytoplasm. The enzyme catalyses L-aspartate 4-semialdehyde + pyruvate = (2S,4S)-4-hydroxy-2,3,4,5-tetrahydrodipicolinate + H2O + H(+). It participates in amino-acid biosynthesis; L-lysine biosynthesis via DAP pathway; (S)-tetrahydrodipicolinate from L-aspartate: step 3/4. In terms of biological role, catalyzes the condensation of (S)-aspartate-beta-semialdehyde [(S)-ASA] and pyruvate to 4-hydroxy-tetrahydrodipicolinate (HTPA). The polypeptide is 4-hydroxy-tetrahydrodipicolinate synthase (Oenococcus oeni (strain ATCC BAA-331 / PSU-1)).